Here is a 171-residue protein sequence, read N- to C-terminus: Protein-export protein SecB (171 aa).

The protein belongs to the SecB family. In terms of assembly, homotetramer, a dimer of dimers. One homotetramer interacts with 1 SecA dimer.

The protein resides in the cytoplasm. One of the proteins required for the normal export of preproteins out of the cell cytoplasm. It is a molecular chaperone that binds to a subset of precursor proteins, maintaining them in a translocation-competent state. It also specifically binds to its receptor SecA. The protein is Protein-export protein SecB of Histophilus somni (strain 129Pt) (Haemophilus somnus).